The primary structure comprises 395 residues: Carbohydrate sulfotransferase 5 (395 aa).

Topologically, residues 1–7 (MRLPRFS) are cytoplasmic. Residues 8 to 26 (STVMLSLLMVQTGILVFLV) traverse the membrane as a helical; Signal-anchor for type II membrane protein segment. Topologically, residues 27–395 (SRQVPSSPAG…ASSTEKQPES (369 aa)) are lumenal. 49 to 55 (WRSGSSF) lines the 3'-phosphoadenylyl sulfate pocket. N-linked (GlcNAc...) asparagine glycosylation is found at Asn116 and Asn142. A 3'-phosphoadenylyl sulfate-binding site is contributed by 202 to 210 (RDPRAVLRS). Asn229 and Asn305 each carry an N-linked (GlcNAc...) asparagine glycan.

Belongs to the sulfotransferase 1 family. Gal/GlcNAc/GalNAc subfamily. Expressed in cornea.

Its subcellular location is the golgi apparatus membrane. In terms of biological role, sulfotransferase that utilizes 3'-phospho-5'-adenylyl sulfate (PAPS) as sulfonate donor to catalyze the transfer of sulfate to position 6 of non-reducing N-acetylglucosamine (GlcNAc) residues of keratan. Mediates sulfation of keratan in cornea. Keratan sulfate plays a central role in maintaining corneal transparency. Acts on the non-reducing terminal GlcNAc of short and long carbohydrate substrates that have poly-N-acetyllactosamine structures. May also have activity toward O-linked sugars of mucin-type acceptors. The chain is Carbohydrate sulfotransferase 5 (Chst5) from Mus musculus (Mouse).